A 581-amino-acid polypeptide reads, in one-letter code: Adenine deaminase (581 aa).

The protein belongs to the metallo-dependent hydrolases superfamily. Adenine deaminase family. Requires Mn(2+) as cofactor.

It carries out the reaction adenine + H2O + H(+) = hypoxanthine + NH4(+). This Brucella melitensis biotype 1 (strain ATCC 23456 / CCUG 17765 / NCTC 10094 / 16M) protein is Adenine deaminase.